A 1403-amino-acid polypeptide reads, in one-letter code: Protein FAM135B (1403 aa).

Disordered stretches follow at residues 445-483 (EKNL…EVQE), 514-548 (EDEC…GQTP), 648-669 (REAL…DLSA), and 718-740 (RHAH…LPSG). A compositionally biased stretch (basic and acidic residues) spans 649–661 (EALDTKPSQPDHA). A compositionally biased stretch (polar residues) spans 731–740 (TESNTSLPSG). Residues serine 775 and serine 776 each carry the phosphoserine modification. The segment at 790 to 819 (TAGFSEDLDPSSKENSPPRHTSLSYGGSRV) is disordered. Residues 802-814 (KENSPPRHTSLSY) are compositionally biased toward polar residues.

Belongs to the FAM135 family.

The sequence is that of Protein FAM135B (Fam135b) from Mus musculus (Mouse).